The chain runs to 220 residues: Metalloproteinase inhibitor 2 (220 aa).

A signal peptide spans 1–26 (MPGAALPSLLAWLAVLLLGRARPADA). Residue C27 coordinates Zn(2+). 2 involved in metalloproteinase-binding regions span residues 27-30 (CSCS) and 95-96 (TE). 6 cysteine pairs are disulfide-bonded: C27/C98, C29/C127, C39/C152, C154/C201, C159/C164, and C172/C193. The NTR domain occupies 27-152 (CSCSPIHPQQ…SLNQRYQMGC (126 aa)).

This sequence belongs to the protease inhibitor I35 (TIMP) family. The activity of TIMP2 is dependent on the presence of disulfide bonds.

It is found in the secreted. Its function is as follows. Complexes with metalloproteinases (such as collagenases) and irreversibly inactivates them by binding to their catalytic zinc cofactor. This Gallus gallus (Chicken) protein is Metalloproteinase inhibitor 2 (TIMP2).